Reading from the N-terminus, the 331-residue chain is Ribonuclease Z (331 aa).

Residues H56, H58, D60, H61, H162, D235, and H297 each contribute to the Zn(2+) site. D60 functions as the Proton acceptor in the catalytic mechanism.

This sequence belongs to the RNase Z family. Homodimer. It depends on Zn(2+) as a cofactor.

It carries out the reaction Endonucleolytic cleavage of RNA, removing extra 3' nucleotides from tRNA precursor, generating 3' termini of tRNAs. A 3'-hydroxy group is left at the tRNA terminus and a 5'-phosphoryl group is left at the trailer molecule.. In terms of biological role, zinc phosphodiesterase, which displays some tRNA 3'-processing endonuclease activity. Probably involved in tRNA maturation, by removing a 3'-trailer from precursor tRNA. In Deinococcus radiodurans (strain ATCC 13939 / DSM 20539 / JCM 16871 / CCUG 27074 / LMG 4051 / NBRC 15346 / NCIMB 9279 / VKM B-1422 / R1), this protein is Ribonuclease Z (rnz).